The primary structure comprises 444 residues: Phosphoglucosamine mutase (444 aa).

Serine 102 (phosphoserine intermediate) is an active-site residue. Residues serine 102, aspartate 241, aspartate 243, and aspartate 245 each coordinate Mg(2+). A Phosphoserine modification is found at serine 102.

This sequence belongs to the phosphohexose mutase family. Mg(2+) is required as a cofactor. In terms of processing, activated by phosphorylation.

The catalysed reaction is alpha-D-glucosamine 1-phosphate = D-glucosamine 6-phosphate. In terms of biological role, catalyzes the conversion of glucosamine-6-phosphate to glucosamine-1-phosphate. This is Phosphoglucosamine mutase from Acidovorax sp. (strain JS42).